The sequence spans 488 residues: Palmitoleoyl-protein carboxylesterase notum1' (488 aa).

The N-terminal stretch at 1-19 (MAGTLCVTLLLLLSTIAVG) is a signal peptide. Residue Asn90 is glycosylated (N-linked (GlcNAc...) asparagine). Active-site charge relay system residues include Ser226, Asp334, and His383.

The protein belongs to the pectinacetylesterase family. Notum subfamily. In terms of tissue distribution, expressed in the egg and through cleavage to gastrulation stages. Enriched in the animal (prospective ectoderm) and dorsal regions in early gastrula. Shows a dynamic expression during embryogenesis, in particular during neural induction and antero-posterior (AP) patterning.

It is found in the secreted. The enzyme catalyses [Wnt protein]-O-(9Z)-hexadecenoyl-L-serine + H2O = [Wnt protein]-L-serine + (9Z)-hexadecenoate + H(+). Carboxylesterase that acts as a key negative regulator of the Wnt signaling pathway by specifically mediating depalmitoleoylation of WNT proteins. Serine palmitoleoylation of WNT proteins is required for efficient binding to frizzled receptors. Functions in the prospective ectoderm and is required for neural induction. The polypeptide is Palmitoleoyl-protein carboxylesterase notum1' (Xenopus laevis (African clawed frog)).